Consider the following 384-residue polypeptide: Succinyl-diaminopimelate desuccinylase (384 aa).

H71 contacts Zn(2+). The active site involves D73. Residue D104 coordinates Zn(2+). The Proton acceptor role is filled by E139. Zn(2+) contacts are provided by E140, E168, and H357.

It belongs to the peptidase M20A family. DapE subfamily. Homodimer. Zn(2+) is required as a cofactor. Requires Co(2+) as cofactor.

It carries out the reaction N-succinyl-(2S,6S)-2,6-diaminopimelate + H2O = (2S,6S)-2,6-diaminopimelate + succinate. The protein operates within amino-acid biosynthesis; L-lysine biosynthesis via DAP pathway; LL-2,6-diaminopimelate from (S)-tetrahydrodipicolinate (succinylase route): step 3/3. Its function is as follows. Catalyzes the hydrolysis of N-succinyl-L,L-diaminopimelic acid (SDAP), forming succinate and LL-2,6-diaminopimelate (DAP), an intermediate involved in the bacterial biosynthesis of lysine and meso-diaminopimelic acid, an essential component of bacterial cell walls. This chain is Succinyl-diaminopimelate desuccinylase, found in Afipia carboxidovorans (strain ATCC 49405 / DSM 1227 / KCTC 32145 / OM5) (Oligotropha carboxidovorans).